The chain runs to 567 residues: Geranylgeranyl transferase type-2 subunit alpha (567 aa).

PFTA repeat units follow at residues 44 to 78 (LDES…QLET), 88 to 122 (LVKA…RLPE), 124 to 158 (NWTR…QAAV), 159 to 193 (PPAE…QLHP), 207 to 241 (VLLK…RADP), and 363 to 397 (VLQS…ALDP). Ser98 is subject to Phosphoserine. LRR repeat units lie at residues 442 to 463 (EVRV…EQLL), 464 to 486 (LVTH…AALR), 487 to 508 (CLEV…TNLP), 509 to 530 (RLQE…QPLA), and 534 to 555 (RLVL…LEQL).

Belongs to the protein prenyltransferase subunit alpha family. As to quaternary structure, heterotrimer composed of RABGGTA, RABGGTB and CHM; within this trimer, RABGGTA and RABGGTB form the catalytic component B, while CHM (component A) mediates peptide substrate binding. The Rab GGTase dimer (RGGT) interacts with CHM (component A) prior to Rab protein binding; the association is stabilized by geranylgeranyl pyrophosphate (GGpp). The CHM:RGGT:Rab complex is destabilized by GGpp. Interacts with non-phosphorylated form of RAB8A; phosphorylation of RAB8A at 'Thr-72' disrupts this interaction.

It catalyses the reaction geranylgeranyl diphosphate + L-cysteinyl-[protein] = S-geranylgeranyl-L-cysteinyl-[protein] + diphosphate. The enzymatic reaction requires the aid of a Rab escort protein (also called component A), such as CHM. Its function is as follows. Catalyzes the transfer of a geranylgeranyl moiety from geranylgeranyl diphosphate to both cysteines of Rab proteins with the C-terminal sequence -XXCC, -XCXC and -CCXX, such as RAB1A, RAB3A, RAB5A and RAB7A. This Homo sapiens (Human) protein is Geranylgeranyl transferase type-2 subunit alpha (RABGGTA).